We begin with the raw amino-acid sequence, 79 residues long: Putative defensin-like protein 80 (79 aa).

An N-terminal signal peptide occupies residues 1–26 (MDVQRSSYIFIALSIIAMFLITGVKP). Intrachain disulfides connect C32-C65, C36-C58, C44-C63, and C48-C64.

It belongs to the DEFL family.

The protein localises to the secreted. This is Putative defensin-like protein 80 (LCR81) from Arabidopsis thaliana (Mouse-ear cress).